The chain runs to 511 residues: Arabinose import ATP-binding protein AraG (511 aa).

ABC transporter domains are found at residues Leu5–Arg240 and Arg240–Arg501. Gly37 to Ser44 contributes to the ATP binding site.

It belongs to the ABC transporter superfamily. Arabinose importer (TC 3.A.1.2.2) family. In terms of assembly, the complex is composed of two ATP-binding proteins (AraG), two transmembrane proteins (AraH) and a solute-binding protein (AraF).

Its subcellular location is the cell inner membrane. It catalyses the reaction L-arabinose(out) + ATP + H2O = L-arabinose(in) + ADP + phosphate + H(+). Functionally, part of the ABC transporter complex AraFGH involved in arabinose import. Responsible for energy coupling to the transport system. This is Arabinose import ATP-binding protein AraG from Ralstonia nicotianae (strain ATCC BAA-1114 / GMI1000) (Ralstonia solanacearum).